Reading from the N-terminus, the 98-residue chain is NADH-ubiquinone oxidoreductase chain 4L (98 aa).

3 helical membrane passes run 1–21 (MPII…GMLI), 29–49 (SLLC…LMAL), and 58–78 (IVPI…LALL).

Belongs to the complex I subunit 4L family. As to quaternary structure, core subunit of respiratory chain NADH dehydrogenase (Complex I) which is composed of 45 different subunits.

It localises to the mitochondrion inner membrane. It catalyses the reaction a ubiquinone + NADH + 5 H(+)(in) = a ubiquinol + NAD(+) + 4 H(+)(out). Its function is as follows. Core subunit of the mitochondrial membrane respiratory chain NADH dehydrogenase (Complex I) which catalyzes electron transfer from NADH through the respiratory chain, using ubiquinone as an electron acceptor. Part of the enzyme membrane arm which is embedded in the lipid bilayer and involved in proton translocation. The polypeptide is NADH-ubiquinone oxidoreductase chain 4L (MT-ND4L) (Nasalis larvatus (Proboscis monkey)).